The sequence spans 344 residues: Ureide permease 3 (344 aa).

Residues 1–10 are Extracellular-facing; that stretch reads MYVIESKGGT. The chain crosses the membrane as a helical span at residues 11–31; it reads ITCMLLALLFLGTWPAIMTLT. Over 32–42 the chain is Cytoplasmic; that stretch reads ERRGRLPQHTY. A helical transmembrane segment spans residues 43–63; sequence LDYTLTNLLAAVIIAFTLGEI. Over 64–78 the chain is Extracellular; it reads SPSRPNFTTQLSQDN. Residues 79–99 traverse the membrane as a helical segment; the sequence is WPSVMFAMAGGIFLSLGTLAT. Residues 100–101 are Cytoplasmic-facing; the sequence is QY. The chain crosses the membrane as a helical span at residues 102 to 122; the sequence is AWAFVGLSVTEVITASIAVVI. Over 123 to 136 the chain is Extracellular; that stretch reads GTTLNYFLDDRINR. The chain crosses the membrane as a helical span at residues 137–157; sequence AEVLFPGVACFLIAVCFGSAV. The Cytoplasmic portion of the chain corresponds to 158–208; that stretch reads HKSNAADNKSKLQGFKSLETTSSFQMETSSIKEGKAKVGTADFLIEVEKQR. 209 to 216 provides a ligand contact to ATP; it reads AIKVFGKS. The helical transmembrane segment at 209 to 229 threads the bilayer; sequence AIKVFGKSTIIGLAITFFAVP. At 230–235 the chain is on the extracellular side; the sequence is KLNVYT. The helical transmembrane segment at 236 to 256 threads the bilayer; that stretch reads AFFYFSISSFGVGLILNIIFL. Residues 257-278 are Cytoplasmic-facing; the sequence is YWPILGLPRSSFKAYLNDWNGR. Residues 279-299 form a helical membrane-spanning segment; it reads GWSFLAGFLCGFGNGLQFMGG. Residues 300 to 344 lie on the Extracellular side of the membrane; it reads QAAGYAAAGAVQIENKHFGGYCCLENTKDHQEKHIHFLSVCYLCS.

This sequence belongs to the plant ureide permease (TC 2.A.7.19) family.

It is found in the membrane. Proton-coupled transporter that transports a wide spectrum of oxo derivatives of heterocyclic nitrogen compounds. This Arabidopsis thaliana (Mouse-ear cress) protein is Ureide permease 3.